The sequence spans 649 residues: Probable potassium transport system protein Kup (649 aa).

Helical transmembrane passes span 1–21 (MAIV…LYTM), 42–62 (ILSL…VFIA), 84–104 (GAWL…DSVL), 126–146 (IMSG…VCLF), 159–179 (TFGT…LVNL), 195–215 (VEFL…TVFL), 235–255 (IYFT…GQGA), 286–306 (VAVL…ITGA), 334–354 (LYIP…LAMF), 364–384 (YGLA…VYIW), 390–410 (VGAV…FFAS), and 414–434 (FLHG…IMYT).

It belongs to the HAK/KUP transporter (TC 2.A.72) family.

Its subcellular location is the cell membrane. The enzyme catalyses K(+)(in) + H(+)(in) = K(+)(out) + H(+)(out). Functionally, transport of potassium into the cell. Likely operates as a K(+):H(+) symporter. The protein is Probable potassium transport system protein Kup of Bifidobacterium adolescentis (strain ATCC 15703 / DSM 20083 / NCTC 11814 / E194a).